The following is a 424-amino-acid chain: Adenylosuccinate synthetase (424 aa).

GTP-binding positions include Gly12–Lys18 and Gly40–Thr42. Asp13 acts as the Proton acceptor in catalysis. Asp13 and Gly40 together coordinate Mg(2+). IMP contacts are provided by residues Asp13–Lys16, Asn38–His41, Thr130, Arg144, Asn220, Thr235, and Arg299. Catalysis depends on His41, which acts as the Proton donor. Residue Val295–Arg301 participates in substrate binding. Residues Arg301, Lys327–Asp329, and Gly412–Gly414 each bind GTP.

It belongs to the adenylosuccinate synthetase family. Homodimer. The cofactor is Mg(2+).

Its subcellular location is the cytoplasm. The catalysed reaction is IMP + L-aspartate + GTP = N(6)-(1,2-dicarboxyethyl)-AMP + GDP + phosphate + 2 H(+). The protein operates within purine metabolism; AMP biosynthesis via de novo pathway; AMP from IMP: step 1/2. Its function is as follows. Plays an important role in the de novo pathway and in the salvage pathway of purine nucleotide biosynthesis. Catalyzes the first committed step in the biosynthesis of AMP from IMP. In Emericella nidulans (strain FGSC A4 / ATCC 38163 / CBS 112.46 / NRRL 194 / M139) (Aspergillus nidulans), this protein is Adenylosuccinate synthetase (adB).